A 416-amino-acid polypeptide reads, in one-letter code: Probable protein phosphatase 2C 49 (416 aa).

Residues 91–411 form the PPM-type phosphatase domain; that stretch reads RYGVTSVFGR…DNVSVVVVDL (321 aa). Mn(2+) is bound by residues Asp-131, Gly-132, and Asp-319. Residues 343 to 360 show a composition bias toward pro residues; the sequence is PPSPPGCSRPKAVLPPPA. A disordered region spans residues 343-368; the sequence is PPSPPGCSRPKAVLPPPAGASGGGGG. Asp-402 provides a ligand contact to Mn(2+).

This sequence belongs to the PP2C family. Requires Mg(2+) as cofactor. Mn(2+) is required as a cofactor.

It catalyses the reaction O-phospho-L-seryl-[protein] + H2O = L-seryl-[protein] + phosphate. The enzyme catalyses O-phospho-L-threonyl-[protein] + H2O = L-threonyl-[protein] + phosphate. This is Probable protein phosphatase 2C 49 from Oryza sativa subsp. japonica (Rice).